The sequence spans 417 residues: Phosphoglycerate kinase (417 aa).

Residues Val23, Asp24, Phe25, Asn26, Gln39, Arg40, Ser63, His64, Gly66, Arg67, Leu122, Arg123, His170, and Arg171 each contribute to the (2R)-3-phosphoglycerate site. Position 214 (Gly214) interacts with ADP. Gly214 contributes to the CDP binding site. Residues Ala215 and Lys216 each coordinate AMP. Residue Ala215 participates in ATP binding. Ala215 serves as a coordination point for Mg(2+). Asp219 is a CDP binding site. A Mg(2+)-binding site is contributed by Asp219. Lys220 is an AMP binding site. Position 220 (Lys220) interacts with ATP. ADP is bound at residue Gly238. Gly238 is a binding site for CDP. AMP is bound by residues Gly239 and Gly313. The ATP site is built by Gly239 and Gly313. CDP is bound by residues Gly338, Ala340, and Phe343. Phe343 serves as a coordination point for ADP. AMP is bound at residue Glu344. Glu344, Asp375, and Thr376 together coordinate ATP. Position 375 (Asp375) interacts with Mg(2+).

It belongs to the phosphoglycerate kinase family. In terms of assembly, monomer. Mg(2+) is required as a cofactor.

It is found in the cytoplasm. The protein localises to the mitochondrion. It carries out the reaction (2R)-3-phosphoglycerate + ATP = (2R)-3-phospho-glyceroyl phosphate + ADP. It functions in the pathway carbohydrate degradation; glycolysis; pyruvate from D-glyceraldehyde 3-phosphate: step 2/5. Functionally, catalyzes one of the two ATP producing reactions in the glycolytic pathway via the reversible conversion of 1,3-diphosphoglycerate to 3-phosphoglycerate. Both L- and D- forms of purine and pyrimidine nucleotides can be used as substrates, but the activity is much lower on pyrimidines. Negatively regulates the biosynthesis of acetyl-CoA from pyruvate in the mitochondrion. In Hypocrea rufa (Trichoderma viride), this protein is Phosphoglycerate kinase (pgk1).